The chain runs to 231 residues: Antiholin-like protein LrgB (231 aa).

The next 5 helical transmembrane spans lie at 7 to 24 (PYFG…GTFL), 34 to 56 (FTPL…FSYA), 91 to 113 (WWQI…YLLA), 149 to 171 (ITAF…FLKV), and 207 to 229 (ASIA…VQLI).

The protein belongs to the CidB/LrgB family. LrgB subfamily.

The protein localises to the cell membrane. Its function is as follows. Inhibits the expression or activity of extracellular murein hydrolases by interacting, possibly with LrgA, with the holin-like protein CidA. The LrgAB and CidA proteins may affect the proton motive force of the membrane. May be involved in programmed cell death (PCD), possibly triggering PCD in response to antibiotics and environmental stresses. This Bacillus subtilis (strain 168) protein is Antiholin-like protein LrgB.